The chain runs to 240 residues: Putative cytochrome c-type biogenesis protein DbsD-like (240 aa).

The next 6 helical transmembrane spans lie at 32-52, 74-94, 104-124, 149-169, 176-196, and 218-238; these read FVFF…ILPI, FFFC…ATLL, GIPV…LNIV, VGIG…LLIW, LFIG…PIII, and APFS…SSIL.

Belongs to the DsbD family.

It is found in the plastid. Its subcellular location is the chloroplast membrane. Its function is as follows. Could be involved in cytochrome c synthesis. The sequence is that of Putative cytochrome c-type biogenesis protein DbsD-like from Porphyra purpurea (Red seaweed).